A 346-amino-acid chain; its full sequence is Biotin synthase (346 aa).

A Radical SAM core domain is found at 38 to 256 (QQVQVSTLLS…IAVARIMMPT (219 aa)). Positions 53, 57, and 60 each coordinate [4Fe-4S] cluster. 4 residues coordinate [2Fe-2S] cluster: C97, C128, C188, and R260.

This sequence belongs to the radical SAM superfamily. Biotin synthase family. Homodimer. The cofactor is [4Fe-4S] cluster. Requires [2Fe-2S] cluster as cofactor.

It catalyses the reaction (4R,5S)-dethiobiotin + (sulfur carrier)-SH + 2 reduced [2Fe-2S]-[ferredoxin] + 2 S-adenosyl-L-methionine = (sulfur carrier)-H + biotin + 2 5'-deoxyadenosine + 2 L-methionine + 2 oxidized [2Fe-2S]-[ferredoxin]. The protein operates within cofactor biosynthesis; biotin biosynthesis; biotin from 7,8-diaminononanoate: step 2/2. Catalyzes the conversion of dethiobiotin (DTB) to biotin by the insertion of a sulfur atom into dethiobiotin via a radical-based mechanism. This is Biotin synthase from Citrobacter koseri (strain ATCC BAA-895 / CDC 4225-83 / SGSC4696).